A 473-amino-acid polypeptide reads, in one-letter code: Photosystem II CP43 reaction center protein (473 aa).

Positions 1–14 are excised as a propeptide; that stretch reads MKTLYSLRRFYHVE. Thr15 is modified (N-acetylthreonine). Thr15 carries the phosphothreonine modification. The next 5 helical transmembrane spans lie at 69 to 93, 134 to 155, 178 to 200, 255 to 275, and 291 to 312; these read LFEV…PHLA, LIGP…KDKN, KACY…RIIT, KPWA…LSYS, and WFNN…ASQA. Glu367 is a binding site for [CaMn4O5] cluster. The helical transmembrane segment at 447–471 threads the bilayer; that stretch reads RARAAAAGFEKGIERETEPVLFMKP.

It belongs to the PsbB/PsbC family. PsbC subfamily. As to quaternary structure, PSII is composed of 1 copy each of membrane proteins PsbA, PsbB, PsbC, PsbD, PsbE, PsbF, PsbH, PsbI, PsbJ, PsbK, PsbL, PsbM, PsbT, PsbX, PsbY, PsbZ, Psb30/Ycf12, at least 3 peripheral proteins of the oxygen-evolving complex and a large number of cofactors. It forms dimeric complexes. Binds multiple chlorophylls and provides some of the ligands for the Ca-4Mn-5O cluster of the oxygen-evolving complex. It may also provide a ligand for a Cl- that is required for oxygen evolution. PSII binds additional chlorophylls, carotenoids and specific lipids. is required as a cofactor.

The protein resides in the plastid. It is found in the chloroplast thylakoid membrane. Functionally, one of the components of the core complex of photosystem II (PSII). It binds chlorophyll and helps catalyze the primary light-induced photochemical processes of PSII. PSII is a light-driven water:plastoquinone oxidoreductase, using light energy to abstract electrons from H(2)O, generating O(2) and a proton gradient subsequently used for ATP formation. The polypeptide is Photosystem II CP43 reaction center protein (Mesostigma viride (Green alga)).